The primary structure comprises 85 residues: Small ribosomal subunit protein uS17 (85 aa).

The protein belongs to the universal ribosomal protein uS17 family. In terms of assembly, part of the 30S ribosomal subunit.

In terms of biological role, one of the primary rRNA binding proteins, it binds specifically to the 5'-end of 16S ribosomal RNA. The polypeptide is Small ribosomal subunit protein uS17 (Trichlorobacter lovleyi (strain ATCC BAA-1151 / DSM 17278 / SZ) (Geobacter lovleyi)).